Reading from the N-terminus, the 690-residue chain is Elongation factor G (690 aa).

Residues 8 to 283 form the tr-type G domain; that stretch reads EDYRNFGIMA…AVVDYLPSPV (276 aa). Residues 17–24, 81–85, and 135–138 contribute to the GTP site; these read AHIDAGKT, DTPGH, and NKMD.

This sequence belongs to the TRAFAC class translation factor GTPase superfamily. Classic translation factor GTPase family. EF-G/EF-2 subfamily.

Its subcellular location is the cytoplasm. Functionally, catalyzes the GTP-dependent ribosomal translocation step during translation elongation. During this step, the ribosome changes from the pre-translocational (PRE) to the post-translocational (POST) state as the newly formed A-site-bound peptidyl-tRNA and P-site-bound deacylated tRNA move to the P and E sites, respectively. Catalyzes the coordinated movement of the two tRNA molecules, the mRNA and conformational changes in the ribosome. This is Elongation factor G from Rhodopseudomonas palustris (strain BisB5).